The primary structure comprises 458 residues: Ammonium transporter Rh type B (458 aa).

Over 1 to 13 (MAGSPSRAAGRRL) the chain is Cytoplasmic. Residues 14–34 (QLPLLCLFLQGATAVLFAVFV) form a helical membrane-spanning segment. Over 35 to 61 (RYNHKTDAALWHRSNHSNADNEFYFRY) the chain is Extracellular. Asn-49 carries N-linked (GlcNAc...) asparagine glycosylation. The helical transmembrane segment at 62–82 (PSFQDVHAMVFVGFGFLMVFL) threads the bilayer. Residues 83–86 (QRYG) lie on the Cytoplasmic side of the membrane. The chain crosses the membrane as a helical span at residues 87–107 (FSSVGFTFLLAAFALQWSTLV). The Extracellular segment spans residues 108-124 (QGFLHSFHGGHIHVGVE). A helical membrane pass occupies residues 125–145 (SMINADFCAGAVLISFGAVLG). At 146–149 (KTGP) the chain is on the cytoplasmic side. Residues 150–170 (TQLLLMALLEVVLFGINEFVL) form a helical membrane-spanning segment. At 171-178 (LHLLGVRD) the chain is on the extracellular side. The helical transmembrane segment at 179–201 (AGGSMTIHTFGAYFGLVLSRVLY) threads the bilayer. Residues 202-219 (RPQLEKSKHRQGSVYHSD) are Cytoplasmic-facing. Residues 220–240 (LFAMIGTIFLWIFWPSFNAAL) traverse the membrane as a helical segment. At 241–251 (TALGAGQHRTA) the chain is on the extracellular side. The chain crosses the membrane as a helical span at residues 252–272 (LNTYYSLAASTLGTFALSALV). Over 273–282 (GEDGRLDMVH) the chain is Cytoplasmic. Residues 283-303 (IQNAALAGGVVVGTSSEMMLT) traverse the membrane as a helical segment. A topological domain (extracellular) is located at residue Pro-304. The chain crosses the membrane as a helical span at residues 305–325 (FGALAAGFLAGTVSTLGYKFF). Topologically, residues 326-346 (TPILESKFKVQDTCGVHNLHG) are cytoplasmic. A helical membrane pass occupies residues 347–367 (MPGVLGALLGVLVAGLATHEA). Residues 368-393 (YGDGLESVFPLIAEGQRSATSQAMHQ) lie on the Extracellular side of the membrane. Residues 394–414 (LFGLFVTLMFASVGGGLGGLL) traverse the membrane as a helical segment. The Cytoplasmic segment spans residues 415–458 (LKLPFLDSPPDSQHYEDQVHWQVPGEHEDKAQRPLRVEEADTQA). Positions 416 to 424 (KLPFLDSPP) are interaction with ANK3. The interval 436–458 (QVPGEHEDKAQRPLRVEEADTQA) is disordered.

The protein belongs to the ammonium transporter (TC 2.A.49) family. Rh subfamily. Interacts (via C-terminus) with ANK2 and ANK3; required for targeting to the basolateral membrane. N-glycosylated. In terms of tissue distribution, specifically expressed in kidney. Also detected in liver and ovary.

It localises to the cell membrane. The protein localises to the basolateral cell membrane. The catalysed reaction is NH4(+)(in) = NH4(+)(out). The enzyme catalyses methylamine(out) = methylamine(in). It catalyses the reaction CO2(out) = CO2(in). Functionally, ammonium transporter involved in the maintenance of acid-base homeostasis. Transports ammonium and its related derivative methylammonium across the basolateral plasma membrane of epithelial cells likely contributing to renal transepithelial ammonia transport and ammonia metabolism. May transport either NH4(+) or NH3 ammonia species predominantly mediating an electrogenic NH4(+) transport. May act as a CO2 channel providing for renal acid secretion. In Homo sapiens (Human), this protein is Ammonium transporter Rh type B.